A 256-amino-acid polypeptide reads, in one-letter code: UPF0259 membrane protein YPO2199/y2042/YP_1997 (256 aa).

The next 6 membrane-spanning stretches (helical) occupy residues 20 to 40, 90 to 110, 118 to 138, 141 to 161, 192 to 212, and 221 to 241; these read IAAILLLALLTAFITVMLNQT, FSALVGNVLLVGGLLTLIAMV, ALQAIGLSLPILPRLLVLMFI, LVIQLGLTFFIVPGVAIAIAL, LIVPAMMLWIAVKLLLLFLIS, and IATIVLSTLSNLASALLLVYL.

Belongs to the UPF0259 family.

The protein localises to the cell inner membrane. This is UPF0259 membrane protein YPO2199/y2042/YP_1997 from Yersinia pestis.